A 506-amino-acid polypeptide reads, in one-letter code: Trans-cinnamate 4-monooxygenase (506 aa).

Residues 3–23 traverse the membrane as a helical segment; the sequence is LLLLEKTLIGLFLAAVVAIAV. (E)-cinnamate contacts are provided by residues 213–218 and Ala307; that span reads RSRLAQ. Cys448 provides a ligand contact to heme.

This sequence belongs to the cytochrome P450 family. Requires heme as cofactor.

It localises to the membrane. The enzyme catalyses (E)-cinnamate + reduced [NADPH--hemoprotein reductase] + O2 = (E)-4-coumarate + oxidized [NADPH--hemoprotein reductase] + H2O + H(+). The protein operates within phenylpropanoid metabolism; trans-4-coumarate biosynthesis; trans-4-coumarate from trans-cinnamate: step 1/1. Functionally, catalyzes the first oxidative step of the phenylpropanoid pathway in higher plants by transforming trans-cinnamate into p-coumarate. The compounds formed by this pathway are essential components for lignification, pollination, and defense against ultraviolet light, predators and pathogens. The chain is Trans-cinnamate 4-monooxygenase (CYP73A11) from Glycine max (Soybean).